Consider the following 398-residue polypeptide: MTTYNLSKKSEIWKEIPIEGFEKYMVSNFGNVKNINTDKILSQSNRGGYFSVYLKPKDIDAQQKKIHRLVALTFVKNKDPENKKVVNHINGDKLDNRAENLEWVTASENVQHAVDNNLITMTKRAVIQCNLKTGKKIKEFESVTDASNETGISTGHICDAANGKWKQAGGYAWKYSKKDSAKIDIDMSKFKQLVDFPNYLINNEGQVYSLARKRFMKPIHRGDSGMNISLSEGDKQKTMLVHKLVASYFLKKNNDDHNHVRHKDGNRQNNNVSNLEWCYLGGMDKHKPESHFSHDYYDEKTAIPLTERKKAVKTIKSSGSKTSKSIGSKTNKSAGSKTASKLGSKTAIKSGSKTTSKISTKSGSKTAIKSGSKTASKISTKSGSKTSKTSKSIKYYEV.

A disordered region spans residues lysine 313–valine 398. 2 stretches are compositionally biased toward low complexity: residues threonine 314–serine 333 and glycine 343–valine 398.

This is an uncharacterized protein from Acanthamoeba polyphaga mimivirus (APMV).